A 230-amino-acid chain; its full sequence is Orotidine 5'-phosphate decarboxylase (230 aa).

Residues aspartate 10, lysine 31, aspartate 58–threonine 67, threonine 117, arginine 179, glutamine 188, glycine 208, and arginine 209 each bind substrate. Lysine 60 functions as the Proton donor in the catalytic mechanism.

The protein belongs to the OMP decarboxylase family. Type 1 subfamily. As to quaternary structure, homodimer.

The catalysed reaction is orotidine 5'-phosphate + H(+) = UMP + CO2. The protein operates within pyrimidine metabolism; UMP biosynthesis via de novo pathway; UMP from orotate: step 2/2. In terms of biological role, catalyzes the decarboxylation of orotidine 5'-monophosphate (OMP) to uridine 5'-monophosphate (UMP). The protein is Orotidine 5'-phosphate decarboxylase of Staphylococcus aureus (strain USA300).